Here is a 511-residue protein sequence, read N- to C-terminus: Glucan endo-1,3-beta-glucosidase 1 (511 aa).

The signal sequence occupies residues 1–28 (MAFTSMVSTVPVLFFFFTLLLISANSSS). A glycan (N-linked (GlcNAc...) asparagine) is linked at asparagine 109. Residue glutamate 137 is the Proton donor of the active site. N-linked (GlcNAc...) asparagine glycosylation is found at asparagine 192 and asparagine 274. Catalysis depends on glutamate 284, which acts as the Nucleophile. 5 N-linked (GlcNAc...) asparagine glycosylation sites follow: asparagine 374, asparagine 378, asparagine 407, asparagine 473, and asparagine 480. Cysteine 382 and cysteine 445 are disulfide-bonded. Residue alanine 485 is the site of GPI-anchor amidated alanine attachment. Residues 486–511 (AGEATSRSLSRGFCVTIMILVTFSIL) constitute a propeptide, removed in mature form.

This sequence belongs to the glycosyl hydrolase 17 family. Post-translationally, contains two additional disulfide bonds.

It localises to the cell membrane. The catalysed reaction is Hydrolysis of (1-&gt;3)-beta-D-glucosidic linkages in (1-&gt;3)-beta-D-glucans.. This Arabidopsis thaliana (Mouse-ear cress) protein is Glucan endo-1,3-beta-glucosidase 1.